We begin with the raw amino-acid sequence, 82 residues long: Defensin-like protein 156 (82 aa).

The signal sequence occupies residues 1-27; that stretch reads MAKISCSYFLVLMLVFSVFSLVEKTKG. Intrachain disulfides connect C31–C77, C41–C60, C46–C71, and C50–C73.

Belongs to the DEFL family. Expressed in flower buds, but not in stems, roots or rosette leaves.

It is found in the secreted. In Arabidopsis thaliana (Mouse-ear cress), this protein is Defensin-like protein 156 (LCR21).